The primary structure comprises 194 residues: Glycerol-3-phosphate acyltransferase 2 (194 aa).

Helical transmembrane passes span 1-21 (MWLLALVVAYLIGSIPTAYVV), 64-84 (VLAVLLGQALGGPVLVILAAL), 112-132 (LAMAPLALFWAFLIWLAVVIF), 135-155 (YISLGSIVAAAVAPFLVIYFH), and 156-173 (RPWPYVLFTFVAAALVIY).

It belongs to the PlsY family. Probably interacts with PlsX.

The protein resides in the cell membrane. The catalysed reaction is an acyl phosphate + sn-glycerol 3-phosphate = a 1-acyl-sn-glycero-3-phosphate + phosphate. It participates in lipid metabolism; phospholipid metabolism. Catalyzes the transfer of an acyl group from acyl-phosphate (acyl-PO(4)) to glycerol-3-phosphate (G3P) to form lysophosphatidic acid (LPA). This enzyme utilizes acyl-phosphate as fatty acyl donor, but not acyl-CoA or acyl-ACP. The polypeptide is Glycerol-3-phosphate acyltransferase 2 (Moorella thermoacetica (strain ATCC 39073 / JCM 9320)).